We begin with the raw amino-acid sequence, 347 residues long: MAERLLVTALKGGKNTKILTLNGKRITKMPSTLEKLPNLKTLDLQNNSISKVCPELRTLTQLTLLNLGNNHLQEVPEEIKYLTSLKNLHLFGNRICRIAPGVFNGLHRLIMLNLNDNRLTSLPQEIGRLRSLTYLSLNRNNLTVIPKELCSLEHLSELHLNYNQIVYIPEEIKFLKNLQQLFLVRNNIEELPEEICHLEKLRVLDIAGNVIQIFPAGFQNLRLTEFYCEGNPLFLKRPFFAVQPKDLWTLREIAARFVLSLLEENDPLIMNVIESYPEVKDKLSKAKKCSICRKPFLTEWLECVYFVAPSKNWKISRNLKLIPVQTSVCSYQCFDQRDPDVFGIAQE.

9 LRR repeats span residues 15 to 37, 38 to 60, 61 to 82, 84 to 105, 108 to 129, 131 to 152, 154 to 175, 177 to 198, and 200 to 222; these read NTKI…EKLP, NLKT…RTLT, QLTL…IKYL, SLKN…VFNG, RLIM…IGRL, SLTY…LCSL, HLSE…IKFL, NLQQ…ICHL, and KLRV…QNLR.

It belongs to the LRRC69 family.

The protein is Leucine-rich repeat-containing protein 69 (Lrrc69) of Mus musculus (Mouse).